The chain runs to 317 residues: (R)-citramalyl-CoA lyase (317 aa).

Residues 4 to 281 (VTIVDVAPRD…PTGIDLSALI (278 aa)) enclose the Pyruvate carboxyltransferase domain. Arg12 is a binding site for substrate. Residues Asp13, His214, and His216 each contribute to the a divalent metal cation site. Cys247 is an active-site residue. Asn256 serves as a coordination point for a divalent metal cation.

Belongs to the HMG-CoA lyase family. As to quaternary structure, homodimer. Requires Mn(2+) as cofactor. Co(2+) serves as cofactor. It depends on Ni(2+) as a cofactor. Mg(2+) is required as a cofactor.

It catalyses the reaction (3R)-citramalyl-CoA = pyruvate + acetyl-CoA. Activated by dithioerythritol (DTE) (in vitro). Functionally, involved in the glyoxylate assimilation cycle used to regenerate acetyl-CoA and produce pyruvate as universal precursor for biosynthesis. Catalyzes the cleavage of (R)-citramalyl-CoA to yield acetyl-CoA and pyruvate. In Chloroflexus aurantiacus (strain ATCC 29366 / DSM 635 / J-10-fl), this protein is (R)-citramalyl-CoA lyase (ccl).